The sequence spans 58 residues: Large ribosomal subunit protein uL30 (58 aa).

Belongs to the universal ribosomal protein uL30 family. Part of the 50S ribosomal subunit.

The chain is Large ribosomal subunit protein uL30 from Acinetobacter baumannii (strain AB307-0294).